Reading from the N-terminus, the 369-residue chain is tRNA/tmRNA (uracil-C(5))-methyltransferase (369 aa).

Glutamine 190, tyrosine 218, asparagine 223, glutamate 239, and aspartate 301 together coordinate S-adenosyl-L-methionine. Cysteine 326 functions as the Nucleophile in the catalytic mechanism. The Proton acceptor role is filled by glutamate 360.

The protein belongs to the class I-like SAM-binding methyltransferase superfamily. RNA M5U methyltransferase family. TrmA subfamily.

The enzyme catalyses uridine(54) in tRNA + S-adenosyl-L-methionine = 5-methyluridine(54) in tRNA + S-adenosyl-L-homocysteine + H(+). It catalyses the reaction uridine(341) in tmRNA + S-adenosyl-L-methionine = 5-methyluridine(341) in tmRNA + S-adenosyl-L-homocysteine + H(+). Functionally, dual-specificity methyltransferase that catalyzes the formation of 5-methyluridine at position 54 (m5U54) in all tRNAs, and that of position 341 (m5U341) in tmRNA (transfer-mRNA). The sequence is that of tRNA/tmRNA (uracil-C(5))-methyltransferase from Vibrio parahaemolyticus serotype O3:K6 (strain RIMD 2210633).